Here is a 165-residue protein sequence, read N- to C-terminus: Phosphopantetheine adenylyltransferase (165 aa).

Ser-10 lines the substrate pocket. ATP contacts are provided by residues 10 to 11 and His-18; that span reads SF. Substrate-binding residues include Lys-42, Leu-74, and Arg-88. Residues 89-91, Glu-99, and 124-130 each bind ATP; these read GLR and YSFLSSS.

This sequence belongs to the bacterial CoaD family. Homohexamer. The cofactor is Mg(2+).

Its subcellular location is the cytoplasm. It catalyses the reaction (R)-4'-phosphopantetheine + ATP + H(+) = 3'-dephospho-CoA + diphosphate. Its pathway is cofactor biosynthesis; coenzyme A biosynthesis; CoA from (R)-pantothenate: step 4/5. In terms of biological role, reversibly transfers an adenylyl group from ATP to 4'-phosphopantetheine, yielding dephospho-CoA (dPCoA) and pyrophosphate. In Anoxybacillus flavithermus (strain DSM 21510 / WK1), this protein is Phosphopantetheine adenylyltransferase.